Reading from the N-terminus, the 949-residue chain is Protocadherin alpha-11 (949 aa).

The first 29 residues, Met1–Gly29, serve as a signal peptide directing secretion. 6 Cadherin domains span residues Gln30–Phe133, Ala157–Phe242, Asp243–Val349, Ala350–Phe454, Ala455–Leu564, and Val580–Ala677. Over Gln30–Asn696 the chain is Extracellular. Asn265 and Asn304 each carry an N-linked (GlcNAc...) asparagine glycan. Asn547 carries N-linked (GlcNAc...) asparagine glycosylation. The helical transmembrane segment at Val697–Tyr717 threads the bilayer. At Thr718 to Gln949 the chain is on the cytoplasmic side. PXXP repeat units follow at residues Pro733 to Pro736 and Pro773 to Pro776. A 6 X 4 AA repeats of P-X-X-P region spans residues Pro733–Pro893. Disordered regions lie at residues Arg753–Tyr807, Ile826–Gly858, and Tyr870–Ile889. Basic and acidic residues predominate over residues Asn780–Glu789. PXXP repeat units lie at residues Pro795–Pro798, Pro831–Pro834, Pro872–Pro875, and Pro890–Pro893. The tract at residues Gln900–Gln949 is disordered. Residues Asp908 to Lys922 are compositionally biased toward basic and acidic residues.

It localises to the cell membrane. Functionally, potential calcium-dependent cell-adhesion protein. May be involved in the establishment and maintenance of specific neuronal connections in the brain. The protein is Protocadherin alpha-11 (PCDHA11) of Pan troglodytes (Chimpanzee).